We begin with the raw amino-acid sequence, 180 residues long: ADP-ribosylation factor 4 (180 aa).

Gly2 is lipidated: N-myristoyl glycine. GTP is bound by residues Gly24 to Thr31, Asp67 to Gln71, and Asn126 to Asp129. The residue at position 147 (Ser147) is a Phosphoserine.

This sequence belongs to the small GTPase superfamily. Arf family. As to quaternary structure, forms a complex containing RAB11A, ASAP1, RAB3IP, RAP11FIP3 and ARF4; the complex promotes preciliary trafficking; the complex binds to RHO in photoreceptor cells and promotes RHO ciliary transport.

Its subcellular location is the golgi apparatus. It is found in the membrane. Its function is as follows. GTP-binding protein that functions as an allosteric activator of the cholera toxin catalytic subunit, an ADP-ribosyltransferase. Involved in protein trafficking; may modulate vesicle budding and uncoating within the Golgi apparatus. Part of the ciliary targeting complex containing Rab11, ASAP1, Rabin8/RAB3IP, RAB11FIP3 and ARF4, which direct preciliary vesicle trafficking to mother centriole and ciliogenesis initiation. The sequence is that of ADP-ribosylation factor 4 (Arf4) from Mus musculus (Mouse).